The primary structure comprises 736 residues: Gephyrin (736 aa).

Positions 14-166 are MPT Mo-transferase; that stretch reads QIRVGVLTVS…FILPALPHAI (153 aa). The interval 140–316 is interaction with GABARAP; it reads LIINLPGSKK…VDITKVARRH (177 aa). 2 disordered regions span residues 181-232 and 260-290; these read DELE…DSSS and TASLSTTPSESPRAQATSRLSTASCPTPKVQ. Residues 187-199 are compositionally biased toward pro residues; that stretch reads PSPPPPLSPPPTT. A phosphoserine mark is found at Ser188 and Ser194. Phosphothreonine is present on Thr198. Position 200 is a phosphoserine (Ser200). Cys212 carries the S-palmitoyl cysteine lipid modification. Residues 261–290 show a composition bias toward polar residues; it reads ASLSTTPSESPRAQATSRLSTASCPTPKVQ. A Phosphoserine modification is found at Ser262. A phosphothreonine mark is found at Thr265 and Thr266. 2 positions are modified to phosphoserine: Ser268 and Ser270. Cys284 is lipidated: S-palmitoyl cysteine. Ser305 bears the Phosphoserine mark. Residues 326 to 736 are MPT adenylyltransferase; the sequence is MDKAFITVLE…VVDVMVIGRL (411 aa).

In the N-terminal section; belongs to the MoaB/Mog family. It in the C-terminal section; belongs to the MoeA family. In terms of assembly, homotrimer, homodimer and homooligomer. Interacts with GABARAP. Interacts with SRGAP2 (via SH3 domain). Interacts with GABRA3. Interacts with GLRB. GABRA3 and GLRB occupy overlapping binding sites. Interacts with ARHGAP32; IQSEC3, INSYN1 and INSYN2A. It depends on Mg(2+) as a cofactor. In terms of processing, palmitoylated. Palmitoylation is stimulated by GABA type A receptors activity. Palmitoylation by ZDHHC12 regulates clustering at synapses.

The protein resides in the postsynaptic cell membrane. The protein localises to the cell membrane. Its subcellular location is the cytoplasm. It is found in the cytosol. It localises to the cytoskeleton. The protein resides in the cell projection. The protein localises to the dendrite. Its subcellular location is the postsynaptic density. The catalysed reaction is molybdopterin + ATP + H(+) = adenylyl-molybdopterin + diphosphate. It catalyses the reaction adenylyl-molybdopterin + molybdate = Mo-molybdopterin + AMP + H(+). Its pathway is cofactor biosynthesis; molybdopterin biosynthesis. With respect to regulation, inhibited by copper and tungsten. Functionally, microtubule-associated protein involved in membrane protein-cytoskeleton interactions. It is thought to anchor the inhibitory glycine receptor (GLYR) to subsynaptic microtubules. Acts as a major instructive molecule at inhibitory synapses, where it also clusters GABA type A receptors. Also has a catalytic activity and catalyzes two steps in the biosynthesis of the molybdenum cofactor. In the first step, molybdopterin is adenylated. Subsequently, molybdate is inserted into adenylated molybdopterin and AMP is released. The protein is Gephyrin of Homo sapiens (Human).